The following is a 251-amino-acid chain: Large ribosomal subunit protein uL3 (251 aa).

At Gln151 the chain carries N5-methylglutamine. A disordered region spans residues 214-251; that stretch reads KDAPFPAGLKSAANSNSAPTETPAEEVAAPEATEGQEG. The span at 231–251 shows a compositional bias: low complexity; the sequence is APTETPAEEVAAPEATEGQEG.

It belongs to the universal ribosomal protein uL3 family. As to quaternary structure, part of the 50S ribosomal subunit. Forms a cluster with proteins L14 and L19. In terms of processing, methylated by PrmB.

Its function is as follows. One of the primary rRNA binding proteins, it binds directly near the 3'-end of the 23S rRNA, where it nucleates assembly of the 50S subunit. This is Large ribosomal subunit protein uL3 from Rhizorhabdus wittichii (strain DSM 6014 / CCUG 31198 / JCM 15750 / NBRC 105917 / EY 4224 / RW1) (Sphingomonas wittichii).